Consider the following 267-residue polypeptide: MEMO1 family protein MA_0601 (267 aa).

It belongs to the MEMO1 family.

This chain is MEMO1 family protein MA_0601, found in Methanosarcina acetivorans (strain ATCC 35395 / DSM 2834 / JCM 12185 / C2A).